A 146-amino-acid polypeptide reads, in one-letter code: Large ribosomal subunit protein uL15 (146 aa).

Basic and acidic residues predominate over residues 1 to 13 (MKLHELKAAEGSR). The interval 1–51 (MKLHELKAAEGSRKVRNRVGRGTSSGNGKTSGRGQKGQKARSGGGVRLGFE) is disordered. 2 stretches are compositionally biased toward gly residues: residues 23–35 (TSSGNGKTSGRGQ) and 42–51 (SGGGVRLGFE).

This sequence belongs to the universal ribosomal protein uL15 family. In terms of assembly, part of the 50S ribosomal subunit.

Its function is as follows. Binds to the 23S rRNA. The sequence is that of Large ribosomal subunit protein uL15 from Streptococcus pyogenes serotype M1.